The following is a 395-amino-acid chain: S-adenosylmethionine synthase (395 aa).

Histidine 18 serves as a coordination point for ATP. Aspartate 20 is a binding site for Mg(2+). A K(+)-binding site is contributed by glutamate 46. Residues glutamate 59 and glutamine 103 each contribute to the L-methionine site. A flexible loop region spans residues 103–113; that stretch reads QSADIAVGVDS. Residues 170-172, 235-236, aspartate 244, 250-251, alanine 267, and lysine 271 contribute to the ATP site; these read DAK, KF, and RK. Residue aspartate 244 participates in L-methionine binding. Position 275 (lysine 275) interacts with L-methionine.

Belongs to the AdoMet synthase family. In terms of assembly, homotetramer; dimer of dimers. Mg(2+) serves as cofactor. K(+) is required as a cofactor.

Its subcellular location is the cytoplasm. It carries out the reaction L-methionine + ATP + H2O = S-adenosyl-L-methionine + phosphate + diphosphate. Its pathway is amino-acid biosynthesis; S-adenosyl-L-methionine biosynthesis; S-adenosyl-L-methionine from L-methionine: step 1/1. Its function is as follows. Catalyzes the formation of S-adenosylmethionine (AdoMet) from methionine and ATP. The overall synthetic reaction is composed of two sequential steps, AdoMet formation and the subsequent tripolyphosphate hydrolysis which occurs prior to release of AdoMet from the enzyme. The polypeptide is S-adenosylmethionine synthase (Granulibacter bethesdensis (strain ATCC BAA-1260 / CGDNIH1)).